A 208-amino-acid polypeptide reads, in one-letter code: Holliday junction resolvase RecU (208 aa).

The disordered stretch occupies residues 1-30 (MNYPNGKPFNRNKSQVGRTHKGQTSKIDYG). Mg(2+) contacts are provided by Thr-87, Asp-89, Glu-102, and Gln-121.

Belongs to the RecU family. It depends on Mg(2+) as a cofactor.

It localises to the cytoplasm. The enzyme catalyses Endonucleolytic cleavage at a junction such as a reciprocal single-stranded crossover between two homologous DNA duplexes (Holliday junction).. Functionally, endonuclease that resolves Holliday junction intermediates in genetic recombination. Cleaves mobile four-strand junctions by introducing symmetrical nicks in paired strands. Promotes annealing of linear ssDNA with homologous dsDNA. Required for DNA repair, homologous recombination and chromosome segregation. The chain is Holliday junction resolvase RecU from Staphylococcus saprophyticus subsp. saprophyticus (strain ATCC 15305 / DSM 20229 / NCIMB 8711 / NCTC 7292 / S-41).